The sequence spans 453 residues: Gastrin/cholecystokinin type B receptor (453 aa).

Topologically, residues 1 to 57 (MDLLKLNRSLQGPGPGSGSSLCRPGVSLLNSSSAGNLSCETPRIRGTGTRELELTIR) are extracellular. Asn-7, Asn-30, and Asn-36 each carry an N-linked (GlcNAc...) asparagine glycan. A helical transmembrane segment spans residues 58–79 (ITLYAVIFLMSVGGNVLIIVVL). The Cytoplasmic segment spans residues 80 to 87 (GLSRRLRT). A helical membrane pass occupies residues 88–109 (VTNAFLLSLAVSDLLLAVACMP). The Extracellular portion of the chain corresponds to 110-131 (FTLLPNLMGTFIFGTVICKAVS). Cys-127 and Cys-205 are oxidised to a cystine. Residues 132 to 150 (YLMGVSVSVSTLNLAAIAL) traverse the membrane as a helical segment. The Cytoplasmic segment spans residues 151–170 (ERYSAICRPLQARVWQTRSH). Residues 171-189 (AARVILATWLLSGLLMVPY) traverse the membrane as a helical segment. The Extracellular segment spans residues 190-219 (PVYTVVQPVGPRILQCMHLWPSERVQQMWS). The chain crosses the membrane as a helical span at residues 220–242 (VLLLILLFFIPGVVMAVAYGLIS). Residues 243 to 339 (RELYLGLRFD…KLLAKKRVVR (97 aa)) are Cytoplasmic-facing. The segment at 257–276 (SETQSRVRNQGGLPGGAAAP) is disordered. Residues 340 to 361 (MLLVIVLLFFVCWLPVYSANTW) traverse the membrane as a helical segment. Residues 362-379 (RAFDGPGARRALAGAPIS) lie on the Extracellular side of the membrane. Residues 380–400 (FIHLLSYTSACANPLVYCFMH) traverse the membrane as a helical segment. The Cytoplasmic portion of the chain corresponds to 401-453 (RRFRQACLDTCARCCPRPPRARPRPLPDEDPPTPSIASLSRLSYTTISTLGPG). The S-palmitoyl cysteine moiety is linked to residue Cys-414.

Belongs to the G-protein coupled receptor 1 family.

Its subcellular location is the cell membrane. Its function is as follows. Receptor for gastrin and cholecystokinin. The CCK-B receptors occur throughout the central nervous system where they modulate anxiety, analgesia, arousal, and neuroleptic activity. This receptor mediates its action by association with G proteins that activate a phosphatidylinositol-calcium second messenger system. In Mus musculus (Mouse), this protein is Gastrin/cholecystokinin type B receptor (Cckbr).